The primary structure comprises 222 residues: Phosphoenolpyruvate guanylyltransferase (222 aa).

Residues Thr-147, Gly-163, and Ser-166 each contribute to the phosphoenolpyruvate site.

It belongs to the CofC family.

It catalyses the reaction phosphoenolpyruvate + GTP + H(+) = enolpyruvoyl-2-diphospho-5'-guanosine + diphosphate. Its pathway is cofactor biosynthesis; coenzyme F420 biosynthesis. Its function is as follows. Guanylyltransferase that catalyzes the activation of phosphoenolpyruvate (PEP) as enolpyruvoyl-2-diphospho-5'-guanosine, via the condensation of PEP with GTP. It is involved in the biosynthesis of coenzyme F420, a hydride carrier cofactor. The sequence is that of Phosphoenolpyruvate guanylyltransferase from Streptosporangium roseum (strain ATCC 12428 / DSM 43021 / JCM 3005 / KCTC 9067 / NCIMB 10171 / NRRL 2505 / NI 9100).